The chain runs to 350 residues: Bifunctional methylenetetrahydrofolate dehydrogenase/cyclohydrolase, mitochondrial (350 aa).

A mitochondrion-targeting transit peptide spans 1–35; that stretch reads MASVSLLSALAVRLLRPTHGCHPRLQPFHLAAVRN. K50 is modified (N6-acetyllysine; alternate). Residue K50 forms a Glycyl lysine isopeptide (Lys-Gly) (interchain with G-Cter in SUMO2); alternate linkage. Substrate-binding positions include 84 to 88 and 131 to 133; these read YVLNK and VQL. NAD(+)-binding positions include 200-202 and R233; that span reads GRS. A substrate-binding site is contributed by 309 to 313; it reads PGGVG.

The protein belongs to the tetrahydrofolate dehydrogenase/cyclohydrolase family. In terms of assembly, homodimer. It depends on Mg(2+) as a cofactor.

It localises to the mitochondrion. The catalysed reaction is (6R)-5,10-methylene-5,6,7,8-tetrahydrofolate + NAD(+) = (6R)-5,10-methenyltetrahydrofolate + NADH. It catalyses the reaction (6R)-5,10-methenyltetrahydrofolate + H2O = (6R)-10-formyltetrahydrofolate + H(+). Functionally, although its dehydrogenase activity is NAD-specific, it can also utilize NADP at a reduced efficiency. This chain is Bifunctional methylenetetrahydrofolate dehydrogenase/cyclohydrolase, mitochondrial (Mthfd2), found in Mus musculus (Mouse).